The sequence spans 167 residues: ATP synthase subunit b (167 aa).

Residues 15–37 (FWQTVIFLVTLYLLSKFAWGPIM) traverse the membrane as a helical segment.

The protein belongs to the ATPase B chain family. As to quaternary structure, F-type ATPases have 2 components, F(1) - the catalytic core - and F(0) - the membrane proton channel. F(1) has five subunits: alpha(3), beta(3), gamma(1), delta(1), epsilon(1). F(0) has three main subunits: a(1), b(2) and c(10-14). The alpha and beta chains form an alternating ring which encloses part of the gamma chain. F(1) is attached to F(0) by a central stalk formed by the gamma and epsilon chains, while a peripheral stalk is formed by the delta and b chains.

Its subcellular location is the cell inner membrane. In terms of biological role, f(1)F(0) ATP synthase produces ATP from ADP in the presence of a proton or sodium gradient. F-type ATPases consist of two structural domains, F(1) containing the extramembraneous catalytic core and F(0) containing the membrane proton channel, linked together by a central stalk and a peripheral stalk. During catalysis, ATP synthesis in the catalytic domain of F(1) is coupled via a rotary mechanism of the central stalk subunits to proton translocation. Functionally, component of the F(0) channel, it forms part of the peripheral stalk, linking F(1) to F(0). This is ATP synthase subunit b from Cytophaga hutchinsonii (strain ATCC 33406 / DSM 1761 / CIP 103989 / NBRC 15051 / NCIMB 9469 / D465).